A 574-amino-acid chain; its full sequence is Arginine--tRNA ligase (574 aa).

Residues 121 to 131 (PNIAKEMHIGH) carry the 'HIGH' region motif.

This sequence belongs to the class-I aminoacyl-tRNA synthetase family. As to quaternary structure, monomer.

The protein resides in the cytoplasm. It catalyses the reaction tRNA(Arg) + L-arginine + ATP = L-arginyl-tRNA(Arg) + AMP + diphosphate. The chain is Arginine--tRNA ligase from Buchnera aphidicola subsp. Acyrthosiphon pisum (strain 5A).